A 239-amino-acid polypeptide reads, in one-letter code: MGQKVNPIGLRLGINRTWDSRWFAGKNEYGKLLHEDMAIRAALMKTLKQAAVSKIIIERPHKKCRVTIHSARPGVVIGKKGADIDKIRKLVAKMTDSEVLINIVEVRKPEIDATLVADSIAQQLERRVAFRRAMKRAVQSAMRLGAEGIRINCSGRLGGAEIARLEWYREGRVPLHTLRADVDYGTATAHTAYGACGIKVWIFKGEILEHDPMAQDKKMAEQDHGGGGGDRRRRDRDAA.

The region spanning 39–107 (IRAALMKTLK…EVLINIVEVR (69 aa)) is the KH type-2 domain. Residues 214–239 (AQDKKMAEQDHGGGGGDRRRRDRDAA) form a disordered region.

The protein belongs to the universal ribosomal protein uS3 family. Part of the 30S ribosomal subunit. Forms a tight complex with proteins S10 and S14.

In terms of biological role, binds the lower part of the 30S subunit head. Binds mRNA in the 70S ribosome, positioning it for translation. The protein is Small ribosomal subunit protein uS3 of Methylocella silvestris (strain DSM 15510 / CIP 108128 / LMG 27833 / NCIMB 13906 / BL2).